Reading from the N-terminus, the 137-residue chain is Large ribosomal subunit protein uL16 (137 aa).

Belongs to the universal ribosomal protein uL16 family. Part of the 50S ribosomal subunit.

Binds 23S rRNA and is also seen to make contacts with the A and possibly P site tRNAs. This chain is Large ribosomal subunit protein uL16, found in Bartonella henselae (strain ATCC 49882 / DSM 28221 / CCUG 30454 / Houston 1) (Rochalimaea henselae).